An 83-amino-acid chain; its full sequence is ATP synthase subunit c (83 aa).

The next 2 membrane-spanning stretches (helical) occupy residues 10 to 30 (IAVALLIGMGALGTAIGFGLL) and 52 to 72 (MFIVAGLLDAVTMIGVGIALY).

This sequence belongs to the ATPase C chain family. As to quaternary structure, F-type ATPases have 2 components, F(1) - the catalytic core - and F(0) - the membrane proton channel. F(1) has five subunits: alpha(3), beta(3), gamma(1), delta(1), epsilon(1). F(0) has three main subunits: a(1), b(2) and c(10-14). The alpha and beta chains form an alternating ring which encloses part of the gamma chain. F(1) is attached to F(0) by a central stalk formed by the gamma and epsilon chains, while a peripheral stalk is formed by the delta and b chains.

The protein localises to the cell inner membrane. In terms of biological role, f(1)F(0) ATP synthase produces ATP from ADP in the presence of a proton or sodium gradient. F-type ATPases consist of two structural domains, F(1) containing the extramembraneous catalytic core and F(0) containing the membrane proton channel, linked together by a central stalk and a peripheral stalk. During catalysis, ATP synthesis in the catalytic domain of F(1) is coupled via a rotary mechanism of the central stalk subunits to proton translocation. Its function is as follows. Key component of the F(0) channel; it plays a direct role in translocation across the membrane. A homomeric c-ring of between 10-14 subunits forms the central stalk rotor element with the F(1) delta and epsilon subunits. The chain is ATP synthase subunit c from Shewanella denitrificans (strain OS217 / ATCC BAA-1090 / DSM 15013).